Reading from the N-terminus, the 2021-residue chain is Fanconi anemia group M protein homolog (2021 aa).

Position 30 is a phosphoserine (serine 30). The 169-residue stretch at 86–254 (ISRSALFCNT…QVITNLLIGK (169 aa)) folds into the Helicase ATP-binding domain. 99–106 (LPTGLGKT) lines the ATP pocket. Positions 202–205 (DEAH) match the DEAH box motif. The Helicase C-terminal domain maps to 437–612 (KLEEVILEHF…VLRLYQGSPR (176 aa)). 9 disordered regions span residues 638–657 (RSVQ…SKSN), 837–886 (PCRA…RMAD), 1002–1049 (CSPY…LPGT), 1244–1273 (GAAD…AISP), 1296–1319 (ASSS…SSKT), 1369–1441 (PRRT…RTCP), 1447–1466 (KGRN…RSQV), 1615–1700 (NKKQ…QPSI), and 1712–1732 (AQSH…ESRK). The segment covering 1018-1035 (ASHSAGNSQQNLESNSAK) has biased composition (polar residues). A compositionally biased stretch (basic and acidic residues) spans 1249-1259 (SGRHSDKEIKD). Basic and acidic residues predominate over residues 1370–1379 (RRTEVEHLTS). Residues 1388–1397 (RKTKKPKRNV) are compositionally biased toward basic residues. At serine 1637 the chain carries Phosphoserine. Over residues 1669 to 1682 (SGPSGSSVPPQVLS) the composition is skewed to low complexity. Over residues 1684-1700 (PSWNQSSRQRLQVQPSI) the composition is skewed to polar residues. An interaction with FAAP24 region spans residues 1689-2009 (SSRQRLQVQP…LNQERQKPDT (321 aa)).

The protein belongs to the DEAD box helicase family. DEAH subfamily. FANCM sub-subfamily. In terms of assembly, component of the Fanconi anemia (FA) core complex, which consists of CENPS, CENPX, FANCA, FANCB, FANCC, FANCE, FANCF, FANCG, FANCL, FANCM, FAAP24 and FAAP100. The FA core complex associates with Bloom syndrome (BLM) complex, which consists of at least BLM, DNA topoisomerase 3-alpha/TOP3A, RMI1/BLAP75, RPA1/RPA70 and RPA2/RPA32. This supercomplex between FA and BLM complexes has been called BRAFT. Forms a discrete complex with CENPS and CENPX, called FANCM-MHF; this interaction stimulates DNA binding and replication fork remodeling by FANCM and stabilizes the binding partners. Forms a heterodimer with FAAP24; this interaction increases FANCM single-stranded DNA-binding activity. Phosphorylated; hyperphosphorylated in response to genotoxic stress.

The protein localises to the nucleus. It carries out the reaction ATP + H2O = ADP + phosphate + H(+). In terms of biological role, DNA-dependent ATPase component of the Fanconi anemia (FA) core complex. Required for the normal activation of the FA pathway, leading to monoubiquitination of the FANCI-FANCD2 complex in response to DNA damage, cellular resistance to DNA cross-linking drugs, and prevention of chromosomal breakage. In complex with CENPS and CENPX, binds double-stranded DNA (dsDNA), fork-structured DNA (fsDNA) and Holliday junction substrates. Its ATP-dependent DNA branch migration activity can process branched DNA structures such as a movable replication fork. This activity is strongly stimulated in the presence of CENPS and CENPX. In complex with FAAP24, efficiently binds to single-strand DNA (ssDNA), splayed-arm DNA, and 3'-flap substrates. In vitro, on its own, strongly binds ssDNA oligomers and weakly fsDNA, but does not bind to dsDNA. This Mus musculus (Mouse) protein is Fanconi anemia group M protein homolog (Fancm).